A 317-amino-acid chain; its full sequence is Ribosomal protein L11 methyltransferase (317 aa).

Residues Thr158, Gly179, Asp201, and Asn244 each coordinate S-adenosyl-L-methionine.

It belongs to the methyltransferase superfamily. PrmA family.

It is found in the cytoplasm. The catalysed reaction is L-lysyl-[protein] + 3 S-adenosyl-L-methionine = N(6),N(6),N(6)-trimethyl-L-lysyl-[protein] + 3 S-adenosyl-L-homocysteine + 3 H(+). Its function is as follows. Methylates ribosomal protein L11. This chain is Ribosomal protein L11 methyltransferase, found in Streptococcus pyogenes serotype M3 (strain ATCC BAA-595 / MGAS315).